The chain runs to 362 residues: Snurportin-1 (362 aa).

N-acetylmethionine is present on methionine 1. Disordered stretches follow at residues 1–40 (MEEL…SLEQ) and 69–90 (DWTG…MDVD). The tract at residues 1 to 65 (MEELSQALAG…LDYVNHARRL (65 aa)) is necessary for interaction with KPNB1 and m3G-cap U1 and U5 snRNP import receptor activity. The necessary for interaction with XPO1 stretch occupies residues 1-160 (MEELSQALAG…NTFPSLLPGG (160 aa)). Residues 11–73 (SFSVSQDLNS…RLAEDDWTGM (63 aa)) enclose the IBB domain. Over residues 12 to 22 (FSVSQDLNSTA) the composition is skewed to polar residues. A compositionally biased stretch (acidic residues) spans 69-89 (DWTGMESEEEEEKKDDEEMDV). Phosphoserine is present on serine 75. The tract at residues 128–130 (GKR) is interaction with m3G-cap structure. The interval 210–330 (LHSKLPEEEG…GIMGKLTPRA (121 aa)) is necessary for binding to the m3G-cap structure. The interval 319-362 (KEGIMGKLTPRASENGHYELEHLSTPKLKSPPQRPNHPESLMEN) is disordered. A compositionally biased stretch (basic and acidic residues) spans 332-342 (ENGHYELEHLS).

It belongs to the snurportin family. Component of an import snRNP complex composed of KPNB1, SNUPN, SMN1 and ZNF259. Component of a nuclear export receptor complex composed of KPNB1, Ran, SNUPN and XPO1. Found in a trimeric export complex with SNUPN, Ran and XPO1. Interacts (via IBB domain) with KPNB1; the interaction is direct. Interacts with DDX20, IPO7, SMN1, SNRPB and XPO1. Interacts directly with XPO1. Its interaction with XPO1 and binding to m3G-cap U snRNPs appears to be mutually exclusive. Can form homomers.

The protein localises to the nucleus. It localises to the cytoplasm. In terms of biological role, functions as an U snRNP-specific nuclear import adapter. Involved in the trimethylguanosine (m3G)-cap-dependent nuclear import of U snRNPs. Binds specifically to the terminal m3G-cap U snRNAs. This chain is Snurportin-1 (SNUPN), found in Bos taurus (Bovine).